The sequence spans 374 residues: Phosphatidylglycerol--prolipoprotein diacylglyceryl transferase (374 aa).

4 helical membrane-spanning segments follow: residues I33–F53, L155–Y175, L195–I215, and L222–I242. Residue R243 participates in a 1,2-diacyl-sn-glycero-3-phospho-(1'-sn-glycerol) binding. The next 3 membrane-spanning stretches (helical) occupy residues P279 to W299, L306 to L326, and I341 to W361.

The protein belongs to the Lgt family.

Its subcellular location is the cell inner membrane. The catalysed reaction is L-cysteinyl-[prolipoprotein] + a 1,2-diacyl-sn-glycero-3-phospho-(1'-sn-glycerol) = an S-1,2-diacyl-sn-glyceryl-L-cysteinyl-[prolipoprotein] + sn-glycerol 1-phosphate + H(+). It functions in the pathway protein modification; lipoprotein biosynthesis (diacylglyceryl transfer). Its function is as follows. Catalyzes the transfer of the diacylglyceryl group from phosphatidylglycerol to the sulfhydryl group of the N-terminal cysteine of a prolipoprotein, the first step in the formation of mature lipoproteins. This Protochlamydia amoebophila (strain UWE25) protein is Phosphatidylglycerol--prolipoprotein diacylglyceryl transferase.